A 170-amino-acid polypeptide reads, in one-letter code: Ribosome maturation factor RimM (170 aa).

Positions 98–170 (EGQYYWADLE…RIELDWDPDF (73 aa)) constitute a PRC barrel domain.

This sequence belongs to the RimM family. As to quaternary structure, binds ribosomal protein uS19.

It localises to the cytoplasm. An accessory protein needed during the final step in the assembly of 30S ribosomal subunit, possibly for assembly of the head region. Essential for efficient processing of 16S rRNA. May be needed both before and after RbfA during the maturation of 16S rRNA. It has affinity for free ribosomal 30S subunits but not for 70S ribosomes. The protein is Ribosome maturation factor RimM of Alkalilimnicola ehrlichii (strain ATCC BAA-1101 / DSM 17681 / MLHE-1).